The chain runs to 445 residues: Transmembrane protein 184C (445 aa).

7 helical membrane passes run 15-35 (LVVLLYIVGLLVVVPLCVWEL), 46-66 (AWFIAGIFLLMTIPISLWGIL), 84-104 (ILWMVPIYSLDSWIALKYPNI), 177-197 (YTVVRPFTTIIALICELVGVY), 210-230 (YLVILNNMSQLFAMYCLVLFY), 252-272 (VVFVSFWQAVLIALLVKVGVI), and 285-305 (AVATGLQDFIICVEMFLAAIA). Disordered regions lie at residues 369-393 (EHTSLLSSSTQDPISDASSMPSSPM) and 421-445 (TSATRDTEESPELMHNSSEKALDRS). Polar residues predominate over residues 370–390 (HTSLLSSSTQDPISDASSMPS).

This sequence belongs to the TMEM184 family.

It localises to the membrane. Its function is as follows. May play a role in cell growth. The polypeptide is Transmembrane protein 184C (TMEM184C) (Gallus gallus (Chicken)).